The primary structure comprises 421 residues: Gamma-glutamyl phosphate reductase (421 aa).

This sequence belongs to the gamma-glutamyl phosphate reductase family.

It is found in the cytoplasm. It catalyses the reaction L-glutamate 5-semialdehyde + phosphate + NADP(+) = L-glutamyl 5-phosphate + NADPH + H(+). Its pathway is amino-acid biosynthesis; L-proline biosynthesis; L-glutamate 5-semialdehyde from L-glutamate: step 2/2. Its function is as follows. Catalyzes the NADPH-dependent reduction of L-glutamate 5-phosphate into L-glutamate 5-semialdehyde and phosphate. The product spontaneously undergoes cyclization to form 1-pyrroline-5-carboxylate. The protein is Gamma-glutamyl phosphate reductase of Pseudomonas paraeruginosa (strain DSM 24068 / PA7) (Pseudomonas aeruginosa (strain PA7)).